The sequence spans 91 residues: Small ribosomal subunit protein bS18 (91 aa).

This sequence belongs to the bacterial ribosomal protein bS18 family. In terms of assembly, part of the 30S ribosomal subunit. Forms a tight heterodimer with protein bS6.

Binds as a heterodimer with protein bS6 to the central domain of the 16S rRNA, where it helps stabilize the platform of the 30S subunit. The sequence is that of Small ribosomal subunit protein bS18 from Paraburkholderia phytofirmans (strain DSM 17436 / LMG 22146 / PsJN) (Burkholderia phytofirmans).